Here is a 353-residue protein sequence, read N- to C-terminus: Dihydroorotate dehydrogenase (quinone) (353 aa).

FMN is bound by residues 66-70 (AGFDK) and T90. K70 provides a ligand contact to substrate. 115–119 (NRMGF) provides a ligand contact to substrate. FMN contacts are provided by N143 and N176. N176 contributes to the substrate binding site. S179 serves as the catalytic Nucleophile. N181 provides a ligand contact to substrate. FMN-binding residues include K212 and T240. 241–242 (NT) contacts substrate. Residues G264, G293, and 314-315 (YT) contribute to the FMN site.

Belongs to the dihydroorotate dehydrogenase family. Type 2 subfamily. Monomer. Requires FMN as cofactor.

Its subcellular location is the cell membrane. The catalysed reaction is (S)-dihydroorotate + a quinone = orotate + a quinol. Its pathway is pyrimidine metabolism; UMP biosynthesis via de novo pathway; orotate from (S)-dihydroorotate (quinone route): step 1/1. In terms of biological role, catalyzes the conversion of dihydroorotate to orotate with quinone as electron acceptor. In Mycolicibacterium gilvum (strain PYR-GCK) (Mycobacterium gilvum (strain PYR-GCK)), this protein is Dihydroorotate dehydrogenase (quinone).